The chain runs to 133 residues: Fluoride-specific ion channel FluC (133 aa).

4 helical membrane passes run 3–23 (AVVW…GSGL), 41–61 (WGTL…LIWV), 76–96 (IVGL…CLVF), and 103–123 (LIVG…VFLG). Positions 81 and 84 each coordinate Na(+).

Belongs to the fluoride channel Fluc/FEX (TC 1.A.43) family.

The protein localises to the cell inner membrane. The catalysed reaction is fluoride(in) = fluoride(out). With respect to regulation, na(+) is not transported, but it plays an essential structural role and its presence is essential for fluoride channel function. Its function is as follows. Fluoride-specific ion channel. Important for reducing fluoride concentration in the cell, thus reducing its toxicity. The protein is Fluoride-specific ion channel FluC of Xylella fastidiosa (strain M23).